The sequence spans 250 residues: Acidic leucine-rich nuclear phosphoprotein 32 family member E (250 aa).

Serine 8 carries the post-translational modification Phosphoserine. 3 LRR repeats span residues glutamate 43–proline 64, lysine 65–cysteine 87, and asparagine 89–glutamine 110. The 39-residue stretch at cysteine 123 to aspartate 161 folds into the LRRCT domain. Composition is skewed to acidic residues over residues aspartate 149 to glutamate 171, glutamate 178 to glutamate 191, and isoleucine 205 to alanine 227. The tract at residues aspartate 149–aspartate 250 is disordered. The interval glutamate 194–glutamate 247 is ZID domain. Residues aspartate 228 to alanine 238 are compositionally biased toward basic and acidic residues. Over residues glutamate 239–aspartate 250 the composition is skewed to acidic residues.

It belongs to the ANP32 family. As to quaternary structure, component of a SWR1-like complex. Interacts with H2A.Z/H2AZ1. In terms of processing, phosphorylated. The phosphorylation is nuclear localization signal (NLS)-dependent.

It localises to the cytoplasm. The protein resides in the nucleus. Functionally, histone chaperone that specifically mediates the genome-wide removal of histone H2A.Z/H2AZ1 from the nucleosome: removes H2A.Z/H2AZ1 from its normal sites of deposition, especially from enhancer and insulator regions. Not involved in deposition of H2A.Z/H2AZ1 in the nucleosome. May stabilize the evicted H2A.Z/H2AZ1-H2B dimer, thus shifting the equilibrium towards dissociation and the off-chromatin state. Inhibits activity of protein phosphatase 2A (PP2A). Does not inhibit protein phosphatase 1. May play a role in cerebellar development and synaptogenesis. This is Acidic leucine-rich nuclear phosphoprotein 32 family member E (anp32e) from Danio rerio (Zebrafish).